The primary structure comprises 255 residues: NAD-dependent protein deacylase (255 aa).

Residues 1–252 enclose the Deacetylase sirtuin-type domain; the sequence is MPKLVVFSGA…AEIEQELEQF (252 aa). NAD(+) is bound at residue 9–28; that stretch reads GAGLSAESGLETFRDNGGLW. Residues Y53 and R56 each coordinate substrate. NAD(+) is bound at residue 103-106; the sequence is QNVD. The active-site Proton acceptor is the H121. Zn(2+) is bound by residues C129, C132, C148, and C151. Residues 190–192, 218–220, and T238 contribute to the NAD(+) site; these read GTS and NLQ.

This sequence belongs to the sirtuin family. Class III subfamily. Requires Zn(2+) as cofactor.

Its subcellular location is the cytoplasm. The enzyme catalyses N(6)-acetyl-L-lysyl-[protein] + NAD(+) + H2O = 2''-O-acetyl-ADP-D-ribose + nicotinamide + L-lysyl-[protein]. It catalyses the reaction N(6)-succinyl-L-lysyl-[protein] + NAD(+) + H2O = 2''-O-succinyl-ADP-D-ribose + nicotinamide + L-lysyl-[protein]. Functionally, NAD-dependent lysine deacetylase and desuccinylase that specifically removes acetyl and succinyl groups on target proteins. Modulates the activities of several proteins which are inactive in their acylated form. The chain is NAD-dependent protein deacylase from Helicobacter hepaticus (strain ATCC 51449 / 3B1).